The following is a 473-amino-acid chain: ATP synthase subunit beta, chloroplastic (473 aa).

172-179 (GGAGVGKT) serves as a coordination point for ATP.

This sequence belongs to the ATPase alpha/beta chains family. In terms of assembly, F-type ATPases have 2 components, CF(1) - the catalytic core - and CF(0) - the membrane proton channel. CF(1) has five subunits: alpha(3), beta(3), gamma(1), delta(1), epsilon(1). CF(0) has four main subunits: a(1), b(1), b'(1) and c(9-12).

Its subcellular location is the plastid. It is found in the chloroplast thylakoid membrane. The enzyme catalyses ATP + H2O + 4 H(+)(in) = ADP + phosphate + 5 H(+)(out). In terms of biological role, produces ATP from ADP in the presence of a proton gradient across the membrane. The catalytic sites are hosted primarily by the beta subunits. The protein is ATP synthase subunit beta, chloroplastic of Pteridium esculentum (Bracken fern).